A 224-amino-acid polypeptide reads, in one-letter code: Ribonuclease HII (224 aa).

Positions 17–201 (GTVIGVDEAG…VLSNLSVKKV (185 aa)) constitute an RNase H type-2 domain. 3 residues coordinate a divalent metal cation: Asp-23, Glu-24, and Asp-111.

This sequence belongs to the RNase HII family. It depends on Mn(2+) as a cofactor. Mg(2+) is required as a cofactor.

It is found in the cytoplasm. The catalysed reaction is Endonucleolytic cleavage to 5'-phosphomonoester.. In terms of biological role, endonuclease that specifically degrades the RNA of RNA-DNA hybrids. The polypeptide is Ribonuclease HII (Pseudothermotoga lettingae (strain ATCC BAA-301 / DSM 14385 / NBRC 107922 / TMO) (Thermotoga lettingae)).